Reading from the N-terminus, the 299-residue chain is RGG repeats nuclear RNA binding protein A (299 aa).

Gly residues predominate over residues 1–21 (RGGGRGGPRGGGRGRGPGRGR). Disordered stretches follow at residues 1 to 173 (RGGG…KEMT) and 232 to 299 (EAVE…LVAK). The segment covering 45–60 (RVQEDGESGKLSERRG) has biased composition (basic and acidic residues). Positions 61–78 (GYGGPRGGFHGGRRGGFN) are enriched in gly residues. Basic and acidic residues-rich tracts occupy residues 86-98 (EGER…DRRS) and 134-146 (DGEK…KEAG). The Arginine-rich RNA-binding motif E-R-P-R-R-X-[F/Y]-[E/D]-R-R-S signature appears at 88–98 (ERPRRVFDRRS). The span at 267 to 278 (RGRGGFGGGVGG) shows a compositional bias: gly residues.

It belongs to the SERBP1-HABP4 family. Expressed in seedlings but not in roots.

Its subcellular location is the nucleus. The protein resides in the cytoplasm. The protein localises to the perinuclear region. In terms of biological role, ribosome-binding protein that acts as a regulator of mRNA translation by promoting ribosome inactivation. Binds RNA. In Nicotiana tabacum (Common tobacco), this protein is RGG repeats nuclear RNA binding protein A.